Reading from the N-terminus, the 172-residue chain is DNA-directed RNA polymerase II subunit RPB7 (172 aa).

It belongs to the eukaryotic RPB7/RPC8 RNA polymerase subunit family. As to quaternary structure, component of the RNA polymerase II (Pol II) complex consisting of 12 subunits. RPB4 and RPB7 form a subcomplex that protrudes from the 10-subunit Pol II core complex.

It localises to the nucleus. Its function is as follows. DNA-dependent RNA polymerase catalyzes the transcription of DNA into RNA using the four ribonucleoside triphosphates as substrates. Component of RNA polymerase II which synthesizes mRNA precursors and many functional non-coding RNAs. Pol II is the central component of the basal RNA polymerase II transcription machinery. It is composed of mobile elements that move relative to each other. RPB7 is part of a subcomplex with RPB4 that binds to a pocket formed by RPB1, RPB2 and RPB6 at the base of the clamp element. The RPB4-RPB7 subcomplex seems to lock the clamp via RPB7 in the closed conformation thus preventing double-stranded DNA to enter the active site cleft. The RPB4-RPB7 subcomplex binds single-stranded DNA and RNA. This Danio rerio (Zebrafish) protein is DNA-directed RNA polymerase II subunit RPB7 (polr2g).